The following is a 161-amino-acid chain: Endoribonuclease YbeY (161 aa).

The Zn(2+) site is built by His121, His125, and His131.

Belongs to the endoribonuclease YbeY family. Zn(2+) serves as cofactor.

The protein resides in the cytoplasm. Its function is as follows. Single strand-specific metallo-endoribonuclease involved in late-stage 70S ribosome quality control and in maturation of the 3' terminus of the 16S rRNA. The polypeptide is Endoribonuclease YbeY (Xanthomonas axonopodis pv. citri (strain 306)).